We begin with the raw amino-acid sequence, 183 residues long: ATP synthase subunit delta (183 aa).

This sequence belongs to the ATPase delta chain family. As to quaternary structure, F-type ATPases have 2 components, F(1) - the catalytic core - and F(0) - the membrane proton channel. F(1) has five subunits: alpha(3), beta(3), gamma(1), delta(1), epsilon(1). F(0) has three main subunits: a(1), b(2) and c(10-14). The alpha and beta chains form an alternating ring which encloses part of the gamma chain. F(1) is attached to F(0) by a central stalk formed by the gamma and epsilon chains, while a peripheral stalk is formed by the delta and b chains.

It localises to the cell inner membrane. F(1)F(0) ATP synthase produces ATP from ADP in the presence of a proton or sodium gradient. F-type ATPases consist of two structural domains, F(1) containing the extramembraneous catalytic core and F(0) containing the membrane proton channel, linked together by a central stalk and a peripheral stalk. During catalysis, ATP synthesis in the catalytic domain of F(1) is coupled via a rotary mechanism of the central stalk subunits to proton translocation. Functionally, this protein is part of the stalk that links CF(0) to CF(1). It either transmits conformational changes from CF(0) to CF(1) or is implicated in proton conduction. The protein is ATP synthase subunit delta of Thermotoga maritima (strain ATCC 43589 / DSM 3109 / JCM 10099 / NBRC 100826 / MSB8).